A 348-amino-acid chain; its full sequence is High mobility group protein 20A (348 aa).

2 disordered regions span residues 1 to 114 (MENL…YVRF) and 181 to 213 (SRKA…DTKE). 2 stretches are compositionally biased toward polar residues: residues 34–47 (SESS…QPVN) and 56–71 (SQVQ…TAEN). Residues 72-82 (TEQKPEEEQQR) are compositionally biased toward basic and acidic residues. Over residues 83-97 (TKRGGWAKGRKRKKP) the composition is skewed to basic residues. The segment at residues 104–172 (PKSPLTGYVR…RYMRELEQYQ (69 aa)) is a DNA-binding region (HMG box). The segment covering 183 to 213 (KAQDRQKGKLHRQDGARQPVHDHEKEADTKE) has biased composition (basic and acidic residues). Residues 230-274 (SKAREAELRQLRKSNMEFEERNAALQKHVESMRTAVEKLEVDVIQ) are a coiled coil.

It localises to the nucleus. Its function is as follows. Plays a role in neuronal differentiation. The chain is High mobility group protein 20A (HMG20A) from Gallus gallus (Chicken).